We begin with the raw amino-acid sequence, 186 residues long: Threonylcarbamoyl-AMP synthase (186 aa).

A YrdC-like domain is found at 2 to 186; it reads VSNLQQVVKA…ARTEQLLRQG (185 aa).

The protein belongs to the SUA5 family. TsaC subfamily.

It is found in the cytoplasm. It catalyses the reaction L-threonine + hydrogencarbonate + ATP = L-threonylcarbamoyladenylate + diphosphate + H2O. Functionally, required for the formation of a threonylcarbamoyl group on adenosine at position 37 (t(6)A37) in tRNAs that read codons beginning with adenine. Catalyzes the conversion of L-threonine, HCO(3)(-)/CO(2) and ATP to give threonylcarbamoyl-AMP (TC-AMP) as the acyladenylate intermediate, with the release of diphosphate. The polypeptide is Threonylcarbamoyl-AMP synthase (Vibrio vulnificus (strain CMCP6)).